A 161-amino-acid chain; its full sequence is Endoribonuclease YbeY (161 aa).

Zn(2+) is bound by residues H121, H125, and H131.

This sequence belongs to the endoribonuclease YbeY family. The cofactor is Zn(2+).

The protein localises to the cytoplasm. Single strand-specific metallo-endoribonuclease involved in late-stage 70S ribosome quality control and in maturation of the 3' terminus of the 16S rRNA. In Bordetella avium (strain 197N), this protein is Endoribonuclease YbeY.